The primary structure comprises 335 residues: MKMIGFEKPFKLEEGNLFKVYEQRKPTPENDDILVKVNSISVNPVDTKQRQMEVTQAPRVLGFDAIGTVEAIGPDVTLFSPGDVVFYAGSPNRQGSNATYQLVSEAIVAKAPHNISANEAVSLPLTGITAYETFFDTFKISHNPAENEGKSVLIINGAGGVGSIATQIAKRYGLTVITTASRQETTEWCEKMGADIVLNHKEDLVRQFKEKEIPLVDYIFCTYNTDLYYNTMIELIKPLGHITTIVAFNEDQDLNALKLKSITFTHEFMFARPIHRTPDMIKQHEYLEDITKNIESGHYQPTTTQVFEGLSPENLYQAHQLLEKQSMIGKLVINI.

This sequence belongs to the zinc-containing alcohol dehydrogenase family. Quinone oxidoreductase subfamily.

In Staphylococcus aureus (strain MSSA476), this protein is Zinc-type alcohol dehydrogenase-like protein SAS2087.